A 142-amino-acid polypeptide reads, in one-letter code: Secreted RxLR effector protein 161 (142 aa).

Residues 1–27 (MKNVPYLSAVGAIMYLMVVTRPDLAAA) form the signal peptide. The short motif at 48–51 (RVLR) is the RxLR element.

The protein belongs to the RxLR effector family.

It is found in the secreted. The protein localises to the host chloroplast envelope. The protein resides in the host nucleus. Functionally, secreted effector that completely suppresses the host cell death induced by cell death-inducing proteins. The protein is Secreted RxLR effector protein 161 of Plasmopara viticola (Downy mildew of grapevine).